A 34-amino-acid polypeptide reads, in one-letter code: Colipase (34 aa).

2 disulfide bridges follow: Cys-12–Cys-23 and Cys-18–Cys-34.

Belongs to the colipase family. Forms a 1:1 stoichiometric complex with pancreatic lipase. In terms of tissue distribution, expressed by the pancreas.

The protein resides in the secreted. Its function is as follows. Colipase is a cofactor of pancreatic lipase. It allows the lipase to anchor itself to the lipid-water interface. Without colipase the enzyme is washed off by bile salts, which have an inhibitory effect on the lipase. The polypeptide is Colipase (CLPS) (Gallus gallus (Chicken)).